Here is a 408-residue protein sequence, read N- to C-terminus: MKSVEWFTWGVFLLLSGFGEAGRMGLGFQEKNPVFVKEKQSPFYAVPSNYEEVEFSSIVEPMYSGIATFGRLENVECLSKRSEDFDIAFIGMPFDTGTSYRPGARFGPSSLREGSRRINTKYGAVNVPLEINPFKSWAKLVDCGDIPVTTYDILKAMDQLESAYFQLIARKPSSFTDHDGFAKNDTVLPRVLSLGGDHTIVLPILRALHRVYGQPISVIHFDSHLDTWAPGLIGDGDEADGINHGSYFYFASQEGIMSKDANIHAGIRTPISSFSDYDDDVDCGFKIIEAREIDDLGIDGIVKKIRDRVGDNLVYLSIDIDVLDPAFAPATGTPETGGWSSREMRAILRGLQGLKFVGADLVEVAPAYDVAEITSLAGAQLLFDIVSMMVKYPLVKEADLSRYMPIHK.

Positions 1-21 (MKSVEWFTWGVFLLLSGFGEA) are cleaved as a signal peptide. Positions 198, 222, 224, 226, 319, and 321 each coordinate Mn(2+).

The protein belongs to the arginase family. The cofactor is Mn(2+).

The catalysed reaction is agmatine + H2O = urea + putrescine. The protein is Putative agmatinase 3 of Schizosaccharomyces pombe (strain 972 / ATCC 24843) (Fission yeast).